Here is a 246-residue protein sequence, read N- to C-terminus: Orotidine 5'-phosphate decarboxylase (246 aa).

Substrate contacts are provided by residues Asp22, Lys44, Asp71–Thr80, Thr131, Arg192, Gln201, Gly221, and Arg222. Residue Lys73 is the Proton donor of the active site.

The protein belongs to the OMP decarboxylase family. Type 1 subfamily. In terms of assembly, homodimer.

It catalyses the reaction orotidine 5'-phosphate + H(+) = UMP + CO2. The protein operates within pyrimidine metabolism; UMP biosynthesis via de novo pathway; UMP from orotate: step 2/2. Its function is as follows. Catalyzes the decarboxylation of orotidine 5'-monophosphate (OMP) to uridine 5'-monophosphate (UMP). This chain is Orotidine 5'-phosphate decarboxylase, found in Enterobacter sp. (strain 638).